The sequence spans 256 residues: 4-oxalocrotonate decarboxylase (256 aa).

This sequence belongs to the hydratase/decarboxylase family. As to quaternary structure, forms a complex with AmnF. Mg(2+) is required as a cofactor. Mn(2+) serves as cofactor.

The catalysed reaction is (3E)-2-oxohex-3-enedioate + H(+) = 2-oxopent-4-enoate + CO2. Strongly inhibited by Fe(2+), Fe(3+), K(3)[Fe(CN)(6)], Ag(+) and Cu(2+). Involved in the modified meta-cleavage pathway for the 2-aminophenol catabolism. The chain is 4-oxalocrotonate decarboxylase (amnE) from Pseudomonas sp.